We begin with the raw amino-acid sequence, 1093 residues long: Regulator of nonsense transcripts 1 homolog (1093 aa).

Residues 42 to 79 (YGVYGGRGPRGNGRRRHDDDDNETEVLDDDDDESLASV) are disordered. Residues 61 to 75 (DDNETEVLDDDDDES) show a composition bias toward acidic residues. The Upf1 CH-rich domain occupies 95–252 (EKELPPHACA…AKLEEMWKEA (158 aa)). Zn(2+) is bound by residues C103, C106, C117, C120, C125, H135, H139, H145, C163, C166, C189, and C193. The tract at residues 103–135 (CAYCGIHSPSSVVKCLTCNKWFCSAKGSAFSSH) is C3H. Residues 117–145 (CLTCNKWFCSAKGSAFSSHIVNHLVRARH) are CC/SHH/C. A C4 region spans residues 163–193 (CYNCGTKNVFILGFIPAKSDTVVVLLCRQPC). Residues Q460, 480 to 484 (GTGKT), Q650, Y687, and E818 contribute to the ATP site.

Belongs to the DNA2/NAM7 helicase family.

Its subcellular location is the cytoplasm. The catalysed reaction is ATP + H2O = ADP + phosphate + H(+). Its function is as follows. RNA-dependent helicase required for nonsense-mediated decay (NMD) of aberrant mRNAs containing premature stop codons and modulates the expression level of normal mRNAs. Also capable of unwinding double-stranded DNA and translocating on single-stranded DNA. In Neurospora crassa (strain ATCC 24698 / 74-OR23-1A / CBS 708.71 / DSM 1257 / FGSC 987), this protein is Regulator of nonsense transcripts 1 homolog.